The chain runs to 135 residues: DNA-directed RNA polymerase subunit omega (135 aa).

A disordered region spans residues 107–135; that stretch reads ASQESQDYEVDGEIDDEINDQDGDEEVSV. The segment covering 112-135 has biased composition (acidic residues); it reads QDYEVDGEIDDEINDQDGDEEVSV.

It belongs to the RNA polymerase subunit omega family. In terms of assembly, the RNAP catalytic core consists of 2 alpha, 1 beta, 1 beta' and 1 omega subunit. When a sigma factor is associated with the core the holoenzyme is formed, which can initiate transcription.

It carries out the reaction RNA(n) + a ribonucleoside 5'-triphosphate = RNA(n+1) + diphosphate. In terms of biological role, promotes RNA polymerase assembly. Latches the N- and C-terminal regions of the beta' subunit thereby facilitating its interaction with the beta and alpha subunits. The chain is DNA-directed RNA polymerase subunit omega from Wolbachia pipientis wMel.